The sequence spans 181 residues: PLAT domain-containing protein 1 (181 aa).

A signal peptide spans 1–14; sequence MARRDVLLPFLLLL. Ala15 carries the N-acetylalanine modification. One can recognise a PLAT domain in the interval 29 to 156; the sequence is CVYTFYLRTG…SPYELTAVRN (128 aa).

As to expression, expressed in root tips, pericycle cells, lateral root primordia, stomata, leaf vasculature, hydathodes and floral organs.

It is found in the endoplasmic reticulum. The protein localises to the plastid. It localises to the chloroplast. The protein resides in the plastoglobule. Positive regulator of abiotic stress tolerance involved in the regulation of plant growth. May be a downstream target of the abscisic acid (ABA) signaling pathway. In Arabidopsis thaliana (Mouse-ear cress), this protein is PLAT domain-containing protein 1.